Here is a 727-residue protein sequence, read N- to C-terminus: MDDTQHFCLRWNNYQSSITSAFENLRDDEAFVDVTLACEGRSIKAHRVVLSACSPYFRELLKSTPCKHPVILLQDVNFMDLHALVEFIYHGEVNVHQKSLQSFLKTAEVLRVSGLTQQQAEDTHSHLAQIQNLANSGGRTPLNTHTQSLPHPHHGSLHDDGGSSTLFSRQGAGSPPPTAVPSLPSHINNQLLKRMAMMHRSSAAAAAEETSHAFKRLRGSDNSLPLSGAVGSGSNNNSPDLPPLHARSASPQQTPADFSTIKHHNNNNTPPLKEEKRNGPTGNGNSGNGNGNGNGASNGNGISISDKLGSLTPSPLARAGADDVKSEPMDMVCSNNNANANDEHSNDSTGEHDANRSSSGDGGKGSLSSGNDEEIGDGLASHHAAPQFIMSPAENKMFHAAAFNFPNIDPSALLGLNTQLQQSGDLAVSPQGKLTTNATTTTTTINNSITNNNNNNNNNNYDYSLPTKNSNSQKTPSPTTTTLTTPTTTTPTRPTAITSASGICGLNLSTFAANGSSSGGSNGGLSMTALLPQQQQQQQQQHQMSQQQQQQQQQQQQQGNSSSGQQQQPNGILACSTPKANTPTTTQQQMYAAVMAAAASASASTSGSANSSLNNSNSTLNTSGGLNNSASGGDDFRCNPCNKNLSSLTRLKRHIQNVHMRPTKEPVCNICKRVYSSLNSLRNHKSIYHRNLKQPKQEPGVGATQAAANSFYHQQHQQQQLNHHSSS.

The BTB domain occupies 32–97 (VDVTLACEGR…IYHGEVNVHQ (66 aa)). Polar residues predominate over residues 135–149 (NSGGRTPLNTHTQSL). 5 disordered regions span residues 135 to 185 (NSGG…SLPS), 218 to 378 (RGSD…IGDG), 445 to 496 (INNS…RPTA), 532 to 583 (PQQQ…ANTP), and 604 to 626 (STSGSANSSLNNSNSTLNTSGGL). Residues 227–238 (SGAVGSGSNNNS) are compositionally biased toward low complexity. Residues 281 to 298 (TGNGNSGNGNGNGNGASN) are compositionally biased toward gly residues. The segment covering 341-355 (NDEHSNDSTGEHDAN) has biased composition (basic and acidic residues). 3 stretches are compositionally biased toward low complexity: residues 445-460 (INNSITNNNNNNNNNN), 475-495 (TPSPTTTTLTTPTTTTPTRPT), and 533-568 (QQQQQQQQQHQMSQQQQQQQQQQQQQGNSSSGQQQQ). 2 consecutive C2H2-type zinc fingers follow at residues 636–659 (FRCNPCNKNLSSLTRLKRHIQNVH) and 666–689 (PVCNICKRVYSSLNSLRNHKSIYH). A disordered region spans residues 694-727 (QPKQEPGVGATQAAANSFYHQQHQQQQLNHHSSS). Positions 713 to 727 (HQQHQQQQLNHHSSS) are enriched in low complexity.

It localises to the nucleus. Its function is as follows. Broad-complex proteins are required for puffing and transcription of salivary gland late genes during metamorphosis. This chain is Broad-complex core protein isoforms 1/2/3/4/5 (br), found in Drosophila melanogaster (Fruit fly).